The primary structure comprises 580 residues: Frizzled (580 aa).

The first 17 residues, M1–S17, serve as a signal peptide directing secretion. At A18 to W248 the chain is on the extracellular side. Residues P48–E166 form the FZ domain. 5 disulfides stabilise this stretch: C53/C114, C61/C107, C98/C134, C124/C163, and C128/C151. The N-linked (GlcNAc...) asparagine glycan is linked to N67. Residue N167 is glycosylated (N-linked (GlcNAc...) asparagine). Residues V249–I269 form a helical membrane-spanning segment. Over D270–R279 the chain is Cytoplasmic. Residues A280–G300 traverse the membrane as a helical segment. Residues A301 to A342 are Extracellular-facing. The helical transmembrane segment at L343–L363 threads the bilayer. The Cytoplasmic segment spans residues A364–H379. Residues L380–A400 traverse the membrane as a helical segment. At K401–F424 the chain is on the extracellular side. Residues L425–I445 traverse the membrane as a helical segment. Topologically, residues S446–R470 are cytoplasmic. A helical transmembrane segment spans residues I471 to Y491. The Extracellular segment spans residues E492 to Q531. Residues I532 to Y552 traverse the membrane as a helical segment. The Cytoplasmic portion of the chain corresponds to S553–V580. Positions K555–W560 match the Lys-Thr-X-X-X-Trp motif, mediates interaction with the PDZ domain of Dvl family members motif. The PDZ-binding signature appears at A578–V580.

Belongs to the G-protein coupled receptor Fz/Smo family.

It localises to the cell membrane. In terms of biological role, receptor for Wnt proteins. Most of frizzled receptors are coupled to the beta-catenin canonical signaling pathway, which leads to the activation of disheveled proteins, inhibition of GSK-3 kinase, nuclear accumulation of beta-catenin and activation of Wnt target genes. A second signaling pathway involving PKC and calcium fluxes has been seen for some family members, but it is not yet clear if it represents a distinct pathway or if it can be integrated in the canonical pathway, as PKC seems to be required for Wnt-mediated inactivation of GSK-3 kinase. Both pathways seem to involve interactions with G-proteins. Required to coordinate the cytoskeletons of epidermal cells to produce a parallel array of cuticular hairs and bristles. This Drosophila virilis (Fruit fly) protein is Frizzled (fz).